Consider the following 152-residue polypeptide: Large ribosomal subunit protein uL15 (152 aa).

The protein belongs to the universal ribosomal protein uL15 family. Part of the 50S ribosomal subunit.

Binds to the 23S rRNA. The sequence is that of Large ribosomal subunit protein uL15 from Staphylothermus marinus (strain ATCC 43588 / DSM 3639 / JCM 9404 / F1).